A 373-amino-acid polypeptide reads, in one-letter code: Anhydro-N-acetylmuramic acid kinase (373 aa).

Position 12–19 (12–19 (GTSLDGVD)) interacts with ATP.

Belongs to the anhydro-N-acetylmuramic acid kinase family.

It carries out the reaction 1,6-anhydro-N-acetyl-beta-muramate + ATP + H2O = N-acetyl-D-muramate 6-phosphate + ADP + H(+). Its pathway is amino-sugar metabolism; 1,6-anhydro-N-acetylmuramate degradation. It functions in the pathway cell wall biogenesis; peptidoglycan recycling. Catalyzes the specific phosphorylation of 1,6-anhydro-N-acetylmuramic acid (anhMurNAc) with the simultaneous cleavage of the 1,6-anhydro ring, generating MurNAc-6-P. Is required for the utilization of anhMurNAc either imported from the medium or derived from its own cell wall murein, and thus plays a role in cell wall recycling. The sequence is that of Anhydro-N-acetylmuramic acid kinase from Salmonella newport (strain SL254).